Reading from the N-terminus, the 319-residue chain is ATP-dependent 6-phosphofructokinase (319 aa).

Residue Gly-11 participates in ATP binding. Position 21–25 (21–25 (RAVVR)) interacts with ADP. Residues 72-73 (RC) and 102-105 (GDGS) each bind ATP. Position 103 (Asp-103) interacts with Mg(2+). 125 to 127 (TID) contacts substrate. The active-site Proton acceptor is Asp-127. Arg-154 contributes to the ADP binding site. Substrate contacts are provided by residues Arg-162 and 169 to 171 (MGR). Residues 185–187 (GAE), Arg-211, and 213–215 (KKH) each bind ADP. Substrate contacts are provided by residues Glu-222, Arg-243, and 249–252 (HVQR).

This sequence belongs to the phosphofructokinase type A (PFKA) family. ATP-dependent PFK group I subfamily. Prokaryotic clade 'B1' sub-subfamily. In terms of assembly, homotetramer. Mg(2+) serves as cofactor.

The protein resides in the cytoplasm. It catalyses the reaction beta-D-fructose 6-phosphate + ATP = beta-D-fructose 1,6-bisphosphate + ADP + H(+). It participates in carbohydrate degradation; glycolysis; D-glyceraldehyde 3-phosphate and glycerone phosphate from D-glucose: step 3/4. Its activity is regulated as follows. Allosterically activated by ADP and other diphosphonucleosides, and allosterically inhibited by phosphoenolpyruvate. Its function is as follows. Catalyzes the phosphorylation of D-fructose 6-phosphate to fructose 1,6-bisphosphate by ATP, the first committing step of glycolysis. This Bacillus mycoides (strain KBAB4) (Bacillus weihenstephanensis) protein is ATP-dependent 6-phosphofructokinase.